A 361-amino-acid polypeptide reads, in one-letter code: tRNA-specific 2-thiouridylase MnmA (361 aa).

Residues 8 to 15 (AMSGGVDS) and M35 each bind ATP. Positions 95–97 (NPD) are interaction with target base in tRNA. C100 acts as the Nucleophile in catalysis. Residues C100 and C196 are joined by a disulfide bond. G124 is a binding site for ATP. The interval 146–148 (KDQ) is interaction with tRNA. The active-site Cysteine persulfide intermediate is the C196. Residues 303 to 304 (RY) form an interaction with tRNA region.

This sequence belongs to the MnmA/TRMU family.

Its subcellular location is the cytoplasm. The enzyme catalyses S-sulfanyl-L-cysteinyl-[protein] + uridine(34) in tRNA + AH2 + ATP = 2-thiouridine(34) in tRNA + L-cysteinyl-[protein] + A + AMP + diphosphate + H(+). Functionally, catalyzes the 2-thiolation of uridine at the wobble position (U34) of tRNA, leading to the formation of s(2)U34. The sequence is that of tRNA-specific 2-thiouridylase MnmA from Chlamydia pneumoniae (Chlamydophila pneumoniae).